A 360-amino-acid polypeptide reads, in one-letter code: Peptide chain release factor 1 (360 aa).

Glutamine 237 carries the N5-methylglutamine modification.

This sequence belongs to the prokaryotic/mitochondrial release factor family. In terms of processing, methylated by PrmC. Methylation increases the termination efficiency of RF1.

It is found in the cytoplasm. Peptide chain release factor 1 directs the termination of translation in response to the peptide chain termination codons UAG and UAA. In Cellvibrio japonicus (strain Ueda107) (Pseudomonas fluorescens subsp. cellulosa), this protein is Peptide chain release factor 1.